The sequence spans 105 residues: Large ribosomal subunit protein eL36 (105 aa).

Belongs to the eukaryotic ribosomal protein eL36 family. Component of the large ribosomal subunit.

The protein resides in the cytoplasm. Its subcellular location is the cytosol. In terms of biological role, component of the large ribosomal subunit. The ribosome is a large ribonucleoprotein complex responsible for the synthesis of proteins in the cell. In Hydrophis hardwickii (Hardwick's spine-bellied seasnake), this protein is Large ribosomal subunit protein eL36 (RPL36).